A 75-amino-acid polypeptide reads, in one-letter code: uncharacterized protein (75 aa).

This is an uncharacterized protein from Equus caballus (Horse).